The primary structure comprises 488 residues: 3-octaprenyl-4-hydroxybenzoate carboxy-lyase (488 aa).

Mn(2+) is bound at residue N172. Prenylated FMN contacts are provided by residues 175 to 177, 189 to 191, and 194 to 195; these read IYR, RWL, and RG. Position 238 (E238) interacts with Mn(2+). D287 functions as the Proton donor in the catalytic mechanism.

Belongs to the UbiD family. Homohexamer. Prenylated FMN is required as a cofactor. Mn(2+) serves as cofactor.

The protein localises to the cell membrane. It carries out the reaction a 4-hydroxy-3-(all-trans-polyprenyl)benzoate + H(+) = a 2-(all-trans-polyprenyl)phenol + CO2. It functions in the pathway cofactor biosynthesis; ubiquinone biosynthesis. Catalyzes the decarboxylation of 3-octaprenyl-4-hydroxy benzoate to 2-octaprenylphenol, an intermediate step in ubiquinone biosynthesis. This Pseudomonas fluorescens (strain Pf0-1) protein is 3-octaprenyl-4-hydroxybenzoate carboxy-lyase.